Here is a 210-residue protein sequence, read N- to C-terminus: CASP-like protein 3A1 (210 aa).

Residues 1–44 lie on the Cytoplasmic side of the membrane; sequence MNGLKTPPEIGIQLPEAKVAAETGTMSGPLVPPRSDRSVRRGTD. Residues 45–65 traverse the membrane as a helical segment; it reads VAHVVLRFVCLLTSVIALSLM. Over 66–94 the chain is Extracellular; the sequence is ATAKEAASISIYGFLLPVSSKWSFSDSFE. A helical transmembrane segment spans residues 95-115; sequence YLVGVSAAVAAHALLQLIISV. Residues 116–130 lie on the Cytoplasmic side of the membrane; it reads SRLLRKSPVIPSRNH. The helical transmembrane segment at 131 to 151 threads the bilayer; sequence AWLIFAGDQAFAYAMLSAGSA. Residues 152–185 are Extracellular-facing; sequence ASGVTNLNRTGIRHSPLPNFCKPLRSFCDHVAAS. N159 is a glycosylation site (N-linked (GlcNAc...) asparagine). The chain crosses the membrane as a helical span at residues 186–206; it reads IAFTFFSCFLLATSAILDVIW. At 207–210 the chain is on the cytoplasmic side; sequence LSKY.

This sequence belongs to the Casparian strip membrane proteins (CASP) family. Homodimer and heterodimers.

The protein resides in the cell membrane. The protein is CASP-like protein 3A1 of Vitis vinifera (Grape).